A 138-amino-acid chain; its full sequence is MAIAYFIPDQAQLLARSYQQNGQQTAASPRTTATAAAPSQQQQQSQQQQQQQRHHHQQQRPQFRANISVPLGSQQGSMTMSEFGCWDLLAQIFCYALRIYSYSSSQRQPTVIQISFEISSGGQNNDEDDVTDATSKEN.

2 disordered regions span residues 21 to 71 (NGQQ…SVPL) and 119 to 138 (SSGG…SKEN). A compositionally biased stretch (low complexity) spans 23-51 (QQTAASPRTTATAAAPSQQQQQSQQQQQQ).

Interacts with Diap2 (via BIR2 domain).

Functionally, activator of apoptosis, independent of rpr and hid, that acts on the effector Dredd. This Drosophila melanogaster (Fruit fly) protein is Cell death protein Grim (grim).